A 486-amino-acid chain; its full sequence is MADGVPAREPRFTAPMDGRSTFGRVRRIHFVGIGGAGMGGIAEVLHNLGFTITGSDVRSGAVVERLVGLGVTVQIGHDPVHVQGMDAVVVSTAVTEDNPEVQAARQQRIPVVPRAEMLAELMRFRHGVAVAGTHGKTTTTSLLASCLAEGELDPTFVIGGRLISAGAHARLGAGPYLVAEADESDASFLHLKPMMAAVTNVDADHLGTYGGDFEALRRTFIEFLHHLPFYGLAVLCIDDPEVRRLRGEIGRPVLTYGFSEDADVRVSGMEADGHRTRFRIEEGDGAAFAVELSLPGRHNVLNAAAAIALARELGVDVAAIQRALSSFQGIGRRFQVYPDIPLAEGAAALVDDYAHHPRELEATLQAARAAWPERRLVVVFQPHRYSRTRELFDDFARVLSGTDALVLTEVYAAGEARLPGADGRALASAVRDRGGAQPIFAESLDEVPGLLAGLLRDDDVVLTLGAGSIGGLPAQLGGGLTAGGGA.

ATP is bound at residue 132–138 (GTHGKTT).

This sequence belongs to the MurCDEF family.

Its subcellular location is the cytoplasm. The catalysed reaction is UDP-N-acetyl-alpha-D-muramate + L-alanine + ATP = UDP-N-acetyl-alpha-D-muramoyl-L-alanine + ADP + phosphate + H(+). Its pathway is cell wall biogenesis; peptidoglycan biosynthesis. Functionally, cell wall formation. The sequence is that of UDP-N-acetylmuramate--L-alanine ligase from Halorhodospira halophila (strain DSM 244 / SL1) (Ectothiorhodospira halophila (strain DSM 244 / SL1)).